A 123-amino-acid polypeptide reads, in one-letter code: Large ribosomal subunit protein bL12 (123 aa).

It belongs to the bacterial ribosomal protein bL12 family. In terms of assembly, homodimer. Part of the ribosomal stalk of the 50S ribosomal subunit. Forms a multimeric L10(L12)X complex, where L10 forms an elongated spine to which 2 to 4 L12 dimers bind in a sequential fashion. Binds GTP-bound translation factors.

Its function is as follows. Forms part of the ribosomal stalk which helps the ribosome interact with GTP-bound translation factors. Is thus essential for accurate translation. The protein is Large ribosomal subunit protein bL12 of Wigglesworthia glossinidia brevipalpis.